A 677-amino-acid chain; its full sequence is mRNA 3'-end-processing protein RNA14 (677 aa).

6 HAT repeats span residues 56-88 (ESYAKVREVYEQFHNTFPFYSPAWTLQLKGELA), 90-124 (DEFETVEKILAQCLSGKLENNDLSLWSTYLDYIRR), 138-170 (VIVKAFQLVMQKCAIFEPKSSSFWNEYLNFLEQ), 181-214 (QRIDMLREFYKKMLCVPFDNLEKMWNRYTQWEQE), 257-289 (RTANKKNIPQPGTSDSNIQQLQIWLNWIKWERE), and 298-330 (MLSQRISYVYKQGIQYMIFSAEMWYDYSMYISE).

As to quaternary structure, component of the CFIA complex, which is composed of RNA14, RNA15, PCF11 and CLP1. Interacts with FIP1, PFS2, YSH1 and probably also with RNA15. Probably interacts with the phosphorylated CTD domain of RPB1/RNA polymerase II.

It is found in the nucleus. It localises to the cytoplasm. Functionally, component of the cleavage factor IA (CFIA) complex, which is involved in the endonucleolytic cleavage during polyadenylation-dependent pre-mRNA 3'-end formation and cooperates with the cleavage factor NAB4/CFIB and the cleavage and polyadenylation factor (CPF) complex. The protein is mRNA 3'-end-processing protein RNA14 (RNA14) of Saccharomyces cerevisiae (strain ATCC 204508 / S288c) (Baker's yeast).